A 354-amino-acid chain; its full sequence is Peptide chain release factor 1 (354 aa).

Glutamine 231 carries the N5-methylglutamine modification.

It belongs to the prokaryotic/mitochondrial release factor family. In terms of processing, methylated by PrmC. Methylation increases the termination efficiency of RF1.

Its subcellular location is the cytoplasm. Functionally, peptide chain release factor 1 directs the termination of translation in response to the peptide chain termination codons UAG and UAA. This is Peptide chain release factor 1 from Acholeplasma laidlawii (strain PG-8A).